A 586-amino-acid polypeptide reads, in one-letter code: DNA-binding protein RFX8 (586 aa).

Positions 22–97 form a DNA-binding region, RFX-type winged-helix; it reads VIQWLVDNFC…YHYDGICIKK (76 aa).

This sequence belongs to the RFX family.

The protein localises to the nucleus. In terms of biological role, may be a transcription factor. The chain is DNA-binding protein RFX8 (RFX8) from Homo sapiens (Human).